The sequence spans 309 residues: MDMRSHEMIERRREDNGNNNGGVVISNIISTNIDDNCNGNNNNTRVSCNSQTLDHHQSKSPSSFSISAAAKPTVRYRECLKNHAASVGGSVHDGCGEFMPSGEEGTIEALRCAACDCHRNFHRKEMDGVGSSDLISHHRHHHYHHNQYGGGGGRRPPPPNMMLNPLMLPPPPNYQPIHHHKYGMSPPGGGGMVTPMSVAYGGGGGGAESSSEDLNLYGQSSGEGAGAAAGQMAFSMSSSKKRFRTKFTTDQKERMMDFAEKLGWRMNKQDEEELKRFCGEIGVKRQVFKVWMHNNKNNAKKPPTPTTTL.

The span at 1 to 16 shows a compositional bias: basic and acidic residues; that stretch reads MDMRSHEMIERRREDN. Positions 1 to 21 are disordered; sequence MDMRSHEMIERRREDNGNNNG. The ZF-HD dimerization-type; degenerate zinc finger occupies 76–125; that stretch reads YRECLKNHAASVGGSVHDGCGEFMPSGEEGTIEALRCAACDCHRNFHRKE. Positions 240 to 303 form a DNA-binding region, homeobox; sequence KKRFRTKFTT…NNKNNAKKPP (64 aa).

In terms of assembly, homo- and heterodimer with other ZFHD proteins. Interacts with MIF1, MIF2 and MIF3; these interactions prevent nuclear localization and DNA-binding to inhibit transcription regulation activity. Binds to ZHD1, ZHD2, ZHD4, ZHD10 and ZHD11. Mostly expressed in flowers and inflorescence.

The protein localises to the nucleus. In terms of biological role, putative transcription factor. Binds DNA at 5'-ATTA-3' consensus promoter regions. Regulates floral architecture and leaf development. Regulators in the abscisic acid (ABA) signal pathway that confers sensitivity to ABA in an ARF2-dependent manner. In Arabidopsis thaliana (Mouse-ear cress), this protein is Zinc-finger homeodomain protein 5 (ZHD5).